The chain runs to 233 residues: 5'-methylthioadenosine/S-adenosylhomocysteine nucleosidase (233 aa).

E12 (proton acceptor) is an active-site residue. Residues G78, I152, and 173–174 (ME) contribute to the substrate site. D197 functions as the Proton donor in the catalytic mechanism.

It belongs to the PNP/UDP phosphorylase family. MtnN subfamily. As to quaternary structure, homodimer.

The catalysed reaction is S-adenosyl-L-homocysteine + H2O = S-(5-deoxy-D-ribos-5-yl)-L-homocysteine + adenine. It catalyses the reaction S-methyl-5'-thioadenosine + H2O = 5-(methylsulfanyl)-D-ribose + adenine. The enzyme catalyses 5'-deoxyadenosine + H2O = 5-deoxy-D-ribose + adenine. Its pathway is amino-acid biosynthesis; L-methionine biosynthesis via salvage pathway; S-methyl-5-thio-alpha-D-ribose 1-phosphate from S-methyl-5'-thioadenosine (hydrolase route): step 1/2. In terms of biological role, catalyzes the irreversible cleavage of the glycosidic bond in both 5'-methylthioadenosine (MTA) and S-adenosylhomocysteine (SAH/AdoHcy) to adenine and the corresponding thioribose, 5'-methylthioribose and S-ribosylhomocysteine, respectively. Also cleaves 5'-deoxyadenosine, a toxic by-product of radical S-adenosylmethionine (SAM) enzymes, into 5-deoxyribose and adenine. Thus, is required for in vivo function of the radical SAM enzymes biotin synthase and lipoic acid synthase, that are inhibited by 5'-deoxyadenosine accumulation. In Yersinia pestis bv. Antiqua (strain Antiqua), this protein is 5'-methylthioadenosine/S-adenosylhomocysteine nucleosidase.